Consider the following 458-residue polypeptide: Tubulin beta chain (458 aa).

Residues Gln11, Glu69, Ser138, Gly142, Thr143, Gly144, Asn204, and Asn226 each coordinate GTP. Glu69 contacts Mg(2+). Residues 426–458 (EAATVEGEEEEDEYAEGGVVNGDQSYDEPYQAA) are disordered. Over residues 431 to 440 (EGEEEEDEYA) the composition is skewed to acidic residues.

Belongs to the tubulin family. As to quaternary structure, dimer of alpha and beta chains. A typical microtubule is a hollow water-filled tube with an outer diameter of 25 nm and an inner diameter of 15 nM. Alpha-beta heterodimers associate head-to-tail to form protofilaments running lengthwise along the microtubule wall with the beta-tubulin subunit facing the microtubule plus end conferring a structural polarity. Microtubules usually have 13 protofilaments but different protofilament numbers can be found in some organisms and specialized cells. Mg(2+) is required as a cofactor.

The protein localises to the cytoplasm. It is found in the cytoskeleton. In terms of biological role, tubulin is the major constituent of microtubules, a cylinder consisting of laterally associated linear protofilaments composed of alpha- and beta-tubulin heterodimers. Microtubules grow by the addition of GTP-tubulin dimers to the microtubule end, where a stabilizing cap forms. Below the cap, tubulin dimers are in GDP-bound state, owing to GTPase activity of alpha-tubulin. The polypeptide is Tubulin beta chain (TUBB1) (Pyropia yezoensis (Susabi-nori)).